The following is a 231-amino-acid chain: Large ribosomal subunit protein uL1 (231 aa).

The protein belongs to the universal ribosomal protein uL1 family. In terms of assembly, part of the 50S ribosomal subunit.

Its function is as follows. Binds directly to 23S rRNA. The L1 stalk is quite mobile in the ribosome, and is involved in E site tRNA release. Protein L1 is also a translational repressor protein, it controls the translation of the L11 operon by binding to its mRNA. This Cellvibrio japonicus (strain Ueda107) (Pseudomonas fluorescens subsp. cellulosa) protein is Large ribosomal subunit protein uL1.